Consider the following 77-residue polypeptide: MPRRVLQGVVISSKADKTVTVKVERKFKHPIYKKFVKVSKKYAAHDSENKYQEGDKVSIIESRPISKTKTWIVVNGE.

The protein belongs to the universal ribosomal protein uS17 family. Part of the 30S ribosomal subunit.

Functionally, one of the primary rRNA binding proteins, it binds specifically to the 5'-end of 16S ribosomal RNA. This is Small ribosomal subunit protein uS17 from Rickettsia akari (strain Hartford).